A 413-amino-acid chain; its full sequence is Divalent metal cation transporter MntH (413 aa).

The next 11 membrane-spanning stretches (helical) occupy residues 19–39, 49–69, 94–114, 122–142, 155–175, 196–216, 240–260, 287–307, 323–343, 349–369, and 393–413; these read FALM…GNFA, GYQL…IQLM, VWFY…AEFI, LVFG…TFLI, LVIG…LFFS, AVLL…IYLH, VAIA…TAAA, AAAL…TVVG, IPLL…ILAG, ILVM…IPLL, and LIVV…ALNL.

This sequence belongs to the NRAMP family.

It localises to the cell inner membrane. Functionally, h(+)-stimulated, divalent metal cation uptake system. The chain is Divalent metal cation transporter MntH from Erwinia tasmaniensis (strain DSM 17950 / CFBP 7177 / CIP 109463 / NCPPB 4357 / Et1/99).